A 1257-amino-acid chain; its full sequence is Receptor tyrosine-protein kinase erbB-2 (1257 aa).

The first 22 residues, 1-22, serve as a signal peptide directing secretion; sequence MELAAWCRWGFLLALLPPGIAG. Residues 23 to 654 lie on the Extracellular side of the membrane; it reads TQVCTGTDMK…PAEQRASPVT (632 aa). A disulfide bridge connects residues C26 and C53. Residues N68 and N188 are each glycosylated (N-linked (GlcNAc...) asparagine). Disulfide bonds link C163/C193, C196/C205, C200/C213, C221/C228, C225/C236, C237/C245, C241/C253, C256/C265, C269/C296, C300/C312, C316/C332, C335/C339, C343/C368, C476/C506, C513/C522, and C517/C530. N260 carries an N-linked (GlcNAc...) asparagine glycan. A glycan (N-linked (GlcNAc...) asparagine) is linked at N532. 8 disulfide bridges follow: C533–C542, C546–C562, C565–C578, C569–C586, C589–C598, C602–C625, C628–C636, and C632–C644. N573 carries an N-linked (GlcNAc...) asparagine glycan. N-linked (GlcNAc...) asparagine glycosylation is present at N631. A helical membrane pass occupies residues 655-677; the sequence is FIIATVVGVLLFLILVVVVGILI. The tract at residues 678–691 is required for interaction with KPNB1 and EEA1; the sequence is KRRRQKIRKYTMRR. The Nuclear localization signal motif lies at 678 to 691; sequence KRRRQKIRKYTMRR. Over 678–1257 the chain is Cytoplasmic; it reads KRRRQKIRKY…PEYLGLDVPV (580 aa). The Protein kinase domain maps to 722–989; the sequence is LRKVKVLGSG…RMARDPQRFV (268 aa). Residues 728 to 736 and K755 contribute to the ATP site; that span reads LGSGAFGTV. D847 serves as the catalytic Proton acceptor. Y879 carries the phosphotyrosine modification. The disordered stretch occupies residues 1029-1181; the sequence is QQGFFSPDPT…PKTLSPGKNG (153 aa). Phosphoserine is present on residues S1056, S1080, S1085, and S1109. Y1114 bears the Phosphotyrosine mark. Phosphotyrosine; by autocatalysis is present on Y1141. Residues 1149–1163 show a composition bias toward pro residues; that stretch reads PQPPLTPEGPLPPVR. At T1168 the chain carries Phosphothreonine. Residues 1197–1199 form an interaction with PIK3C2B region; the sequence is EYL. The residue at position 1198 (Y1198) is a Phosphotyrosine. A disordered region spans residues 1200 to 1257; it reads VPREGTASPPHPSPAFSPAFDNLYYWDQNSSEQGPPPSNFEGTPTAENPEYLGLDVPV. Y1250 bears the Phosphotyrosine; by autocatalysis mark.

This sequence belongs to the protein kinase superfamily. Tyr protein kinase family. EGF receptor subfamily. In terms of assembly, homodimer. Heterodimer with EGFR, ERBB3 and ERBB4. Part of a complex with EGFR and either PIK3C2A or PIK3C2B. May interact with PIK3C2B when phosphorylated on Tyr-1198. Interacts with PRKCABP and PLXNB1. Interacts (when phosphorylated on Tyr-1250) with MEMO1. Interacts with MUC1. Interacts (when phosphorylated on Tyr-1141) with GRB7 (via SH2 domain). Interacts (when phosphorylated on Tyr-1250) with ERBIN Interacts with SRC, KPNB1, RANBP2, EEA1, CRM1, CLTC, PTK6, RPA194, MYOC and ACTB. Interacts with HSP90AA1 and HSP90AB1; the interaction suppresses ERBB2 kinase activity. Interacts with SORL1; this interaction regulates ERBB2 subcellular distribution by promoting its recycling after internalization from endosomes back to the plasma membrane, hence stimulates ERBB2-mediated signaling. Interacts with SH3BGRL. Interacts with ROR1. Autophosphorylated. Autophosphorylation occurs in trans, i.e. one subunit of the dimeric receptor phosphorylates tyrosine residues on the other subunit. Ligand-binding increases phosphorylation on tyrosine residues. Signaling via SEMA4C promotes phosphorylation at Tyr-1250. Dephosphorylated by PTPN12.

It is found in the cell membrane. The protein localises to the cell projection. The protein resides in the ruffle membrane. It localises to the early endosome. Its subcellular location is the cytoplasm. It is found in the perinuclear region. The protein localises to the nucleus. It catalyses the reaction L-tyrosyl-[protein] + ATP = O-phospho-L-tyrosyl-[protein] + ADP + H(+). In terms of biological role, protein tyrosine kinase that is part of several cell surface receptor complexes, but that apparently needs a coreceptor for ligand binding. Essential component of a neuregulin-receptor complex, although neuregulins do not interact with it alone. GP30 is a potential ligand for this receptor. Regulates outgrowth and stabilization of peripheral microtubules (MTs). Upon ERBB2 activation, the MEMO1-RHOA-DIAPH1 signaling pathway elicits the phosphorylation and thus the inhibition of GSK3B at cell membrane. This prevents the phosphorylation of APC and CLASP2, allowing its association with the cell membrane. In turn, membrane-bound APC allows the localization of MACF1 to the cell membrane, which is required for microtubule capture and stabilization. Interacts (preferentially with the tyrosine phosphorylated form) with CPNE3; this interaction occurs at the cell membrane and is increased in a growth factor heregulin-dependent manner. Its function is as follows. In the nucleus is involved in transcriptional regulation. Associates with the 5'-TCAAATTC-3' sequence in the PTGS2/COX-2 promoter and activates its transcription. Implicated in transcriptional activation of CDKN1A; the function involves STAT3 and SRC. Involved in the transcription of rRNA genes by RNA Pol I and enhances protein synthesis and cell growth. The polypeptide is Receptor tyrosine-protein kinase erbB-2 (Erbb2) (Rattus norvegicus (Rat)).